The primary structure comprises 283 residues: MIVTEKAPAKLNLSLDTPMRYFDGSPQWDMVMVSADLADYVTVETHRRPATIKVYTNSGFLPNDQRNLAYQAAHILRSRFHCKDGVTIRIKKQIPVAAGLGGGSSDAAAVLRALNSIWRLGLSLSELAKIALTIDSDVPYCIYNKLAHVTGHGEKIELLPPQPHYWAVIAKQKISVSTPQILRQINYEKLQHLNNEALLTNLKKEDWQEATKYMGNVLEPLTMKFYPEIGRLKNKMKELGADVAQMSGTGPTVFAICHTESRAKRIQNSIRGFCRDVHVVTLL.

Lys-10 is a catalytic residue. 95–105 (PVAAGLGGGSS) contributes to the ATP binding site. Residue Asp-137 is part of the active site.

It belongs to the GHMP kinase family. IspE subfamily.

The catalysed reaction is 4-CDP-2-C-methyl-D-erythritol + ATP = 4-CDP-2-C-methyl-D-erythritol 2-phosphate + ADP + H(+). Its pathway is isoprenoid biosynthesis; isopentenyl diphosphate biosynthesis via DXP pathway; isopentenyl diphosphate from 1-deoxy-D-xylulose 5-phosphate: step 3/6. Functionally, catalyzes the phosphorylation of the position 2 hydroxy group of 4-diphosphocytidyl-2C-methyl-D-erythritol. The polypeptide is 4-diphosphocytidyl-2-C-methyl-D-erythritol kinase (Limosilactobacillus reuteri (strain DSM 20016) (Lactobacillus reuteri)).